The primary structure comprises 262 residues: Thrombin-like enzyme calobin-1 (262 aa).

The signal sequence occupies residues 1 to 18; it reads MVLISVLANLLILQLSYA. The propeptide occupies 19–24; it reads QKSSEL. Residues 25–253 enclose the Peptidase S1 domain; it reads VIGGDECNIN…HLDWIQSIIA (229 aa). 6 cysteine pairs are disulfide-bonded: C31–C165, C52–C68, C100–C260, C144–C214, C176–C193, and C204–C229. H67 acts as the Charge relay system in catalysis. The N-linked (GlcNAc...) asparagine glycan is linked to N105. D112 serves as the catalytic Charge relay system. Catalysis depends on S208, which acts as the Charge relay system.

The protein belongs to the peptidase S1 family. Snake venom subfamily. As to quaternary structure, monomer. In terms of processing, N-glycosylated. As to expression, expressed by the venom gland.

It is found in the secreted. Strongly inhibited by PMSF, and moderately by benzamidine and soybean trypsin inhibitor. Functionally, thrombin-like snake venom serine protease. Has a coagulant activity. Acts on alpha-chains of fibrinogen (FGA) generating fibrinopeptide A. This chain is Thrombin-like enzyme calobin-1, found in Gloydius ussuriensis (Ussuri mamushi).